A 93-amino-acid polypeptide reads, in one-letter code: DNA-binding protein HB1 (93 aa).

The protein belongs to the bacterial histone-like protein family. As to quaternary structure, homodimer.

Histone-like DNA-binding protein which is capable of wrapping DNA to stabilize it, and thus to prevent its denaturation under extreme environmental conditions. The polypeptide is DNA-binding protein HB1 (hup) (Bifidobacterium longum (strain NCC 2705)).